We begin with the raw amino-acid sequence, 176 residues long: NAD(P)H-quinone oxidoreductase subunit 6, chloroplastic (176 aa).

Transmembrane regions (helical) follow at residues 10–30 (FLLV…VLFT), 32–52 (PIFS…LYIL), 61–81 (AQLL…VMFM), 95–115 (VGDG…ISTI), and 152–172 (FFLP…GAIS).

Belongs to the complex I subunit 6 family. In terms of assembly, NDH is composed of at least 16 different subunits, 5 of which are encoded in the nucleus.

It is found in the plastid. Its subcellular location is the chloroplast thylakoid membrane. The enzyme catalyses a plastoquinone + NADH + (n+1) H(+)(in) = a plastoquinol + NAD(+) + n H(+)(out). The catalysed reaction is a plastoquinone + NADPH + (n+1) H(+)(in) = a plastoquinol + NADP(+) + n H(+)(out). Its function is as follows. NDH shuttles electrons from NAD(P)H:plastoquinone, via FMN and iron-sulfur (Fe-S) centers, to quinones in the photosynthetic chain and possibly in a chloroplast respiratory chain. The immediate electron acceptor for the enzyme in this species is believed to be plastoquinone. Couples the redox reaction to proton translocation, and thus conserves the redox energy in a proton gradient. This chain is NAD(P)H-quinone oxidoreductase subunit 6, chloroplastic (ndhG), found in Aethionema grandiflorum (Persian stone-cress).